Consider the following 706-residue polypeptide: Probable rhamnogalacturonate lyase B (706 aa).

Residues 1–19 (MRLLHPLIPASLLLTLTSA) form the signal peptide. N-linked (GlcNAc...) asparagine glycosylation is found at Asn27, Asn40, Asn143, Asn239, Asn285, Asn380, Asn495, Asn569, Asn597, and Asn638.

Belongs to the polysaccharide lyase 4 family.

It localises to the secreted. It catalyses the reaction Endotype eliminative cleavage of L-alpha-rhamnopyranosyl-(1-&gt;4)-alpha-D-galactopyranosyluronic acid bonds of rhamnogalacturonan I domains in ramified hairy regions of pectin leaving L-rhamnopyranose at the reducing end and 4-deoxy-4,5-unsaturated D-galactopyranosyluronic acid at the non-reducing end.. Functionally, pectinolytic enzymes consist of four classes of enzymes: pectin lyase, polygalacturonase, pectin methylesterase and rhamnogalacturonase. Degrades the rhamnogalacturonan I (RG-I) backbone of pectin. This Aspergillus niger (strain ATCC MYA-4892 / CBS 513.88 / FGSC A1513) protein is Probable rhamnogalacturonate lyase B (rglB).